Consider the following 475-residue polypeptide: MNLETIIGLEVHVELKTNSKIFSASPTEFGAEPNTQTSVIDLGYPGVLPTLNKEAVNFAMKAAMALNCEIATETKFDRKNYFYPDNPKAYQISQFDKPIGENGWIEIEVDGKKKRIGITRLHLEEDAGKSTHTADGSLVDYNRQGMPLIEIVSEPDMRTPEEAYAYLEKLKSIIQYTGVSDCKMEEGSLRCDANISLRPVGQEKFGTKAELKNLNSFTYVQKGLEHEQVRQEKELLSGGIIQQETRRYDEATKKTILMRVKEGSDDYRYFPEPDLVELYIDDEWKEAVRASIPELPDARKARYVAEIGLPAYDAHVLTLTKEMSDFFEATVADGADAKLTSNWLMGEVLAYLNKQQKELKDVALTPAGLSKMVQLIEKGTISSKIAKKVFNELIEKGGDPEEIVKAKGLVQISDEGTLRKVVTEILDNNGQSIEDFKNGKDRAIGFLVGQIMKATKGQANPPLVNKILLEEINKR.

Belongs to the GatB/GatE family. GatB subfamily. In terms of assembly, heterotrimer of A, B and C subunits.

It carries out the reaction L-glutamyl-tRNA(Gln) + L-glutamine + ATP + H2O = L-glutaminyl-tRNA(Gln) + L-glutamate + ADP + phosphate + H(+). The catalysed reaction is L-aspartyl-tRNA(Asn) + L-glutamine + ATP + H2O = L-asparaginyl-tRNA(Asn) + L-glutamate + ADP + phosphate + 2 H(+). Allows the formation of correctly charged Asn-tRNA(Asn) or Gln-tRNA(Gln) through the transamidation of misacylated Asp-tRNA(Asn) or Glu-tRNA(Gln) in organisms which lack either or both of asparaginyl-tRNA or glutaminyl-tRNA synthetases. The reaction takes place in the presence of glutamine and ATP through an activated phospho-Asp-tRNA(Asn) or phospho-Glu-tRNA(Gln). The protein is Aspartyl/glutamyl-tRNA(Asn/Gln) amidotransferase subunit B of Bacillus cereus (strain G9842).